A 179-amino-acid polypeptide reads, in one-letter code: CASP-like protein 5A2 (179 aa).

Residues 1-54 (MEATSHPAVHPVAVPPQFQGAGPPAIQMKDFPGSPGTAGGLALRFTQFGFSLIS) lie on the Cytoplasmic side of the membrane. Transmembrane regions (helical) follow at residues 55 to 75 (LCIMVSIAGFSSVTAFCFLVA) and 76 to 96 (TMVFQCIWSLCLGALDIYALL). The Cytoplasmic segment spans residues 97-114 (TQRSFRNPLIVSLFVVGD). The chain crosses the membrane as a helical span at residues 115–135 (WVTSTMTFAGACAAAGITVLI). Residues 136-154 (DNDLEQCGPNHCGRFEAAA) lie on the Extracellular side of the membrane. The helical transmembrane segment at 155–175 (AMAFMSWTATTLSFCLSFWLL) threads the bilayer. Residues 176-179 (ASCR) lie on the Cytoplasmic side of the membrane.

It belongs to the Casparian strip membrane proteins (CASP) family. In terms of assembly, homodimer and heterodimers.

The protein resides in the cell membrane. The sequence is that of CASP-like protein 5A2 from Physcomitrium patens (Spreading-leaved earth moss).